The chain runs to 504 residues: UNC93-like protein C922.05c (504 aa).

Helical transmembrane passes span 64-84, 97-116, 123-145, 149-169, 186-206, 219-239, 275-293, 310-330, 343-363, 391-411, and 452-472; these read IIVS…SGLG, ANVA…GSIC, LTLA…YKHV, GFVI…WAAQ, IAIF…VPLA, GTYA…LFMV, YWVL…FTTY, LNNL…ALFL, VGWG…LAFQ, FLYI…YWII, and YFAS…PVIW.

This sequence belongs to the unc-93 family.

The protein resides in the cytoplasm. The protein localises to the membrane. This chain is UNC93-like protein C922.05c, found in Schizosaccharomyces pombe (strain 972 / ATCC 24843) (Fission yeast).